Here is a 329-residue protein sequence, read N- to C-terminus: Peroxidase 5 (329 aa).

A signal peptide spans 1–26; sequence MSSKRVTWLSLTWVLVFLCLSVELEA. Glutamine 27 carries the pyrrolidone carboxylic acid modification. Cystine bridges form between cysteine 37–cysteine 117, cysteine 70–cysteine 75, cysteine 123–cysteine 324, and cysteine 202–cysteine 234. Histidine 68 functions as the Proton acceptor in the catalytic mechanism. Ca(2+)-binding residues include aspartate 69, valine 72, glycine 74, aspartate 76, and serine 78. Proline 165 is a substrate binding site. Heme b is bound at residue histidine 195. Residue threonine 196 participates in Ca(2+) binding. The N-linked (GlcNAc...) asparagine glycan is linked to asparagine 213. The Ca(2+) site is built by serine 251 and aspartate 256.

It belongs to the peroxidase family. Classical plant (class III) peroxidase subfamily. The cofactor is heme b. Requires Ca(2+) as cofactor.

The protein resides in the secreted. The catalysed reaction is 2 a phenolic donor + H2O2 = 2 a phenolic radical donor + 2 H2O. Functionally, removal of H(2)O(2), oxidation of toxic reductants, biosynthesis and degradation of lignin, suberization, auxin catabolism, response to environmental stresses such as wounding, pathogen attack and oxidative stress. These functions might be dependent on each isozyme/isoform in each plant tissue. The chain is Peroxidase 5 from Vitis vinifera (Grape).